Consider the following 147-residue polypeptide: HTH-type transcriptional regulator MntR (147 aa).

The HTH dtxR-type domain maps to Met-1–Thr-63. Positions 8, 11, 77, 99, 102, and 103 each coordinate Mn(2+).

The protein belongs to the DtxR/MntR family. As to quaternary structure, homodimer.

The protein resides in the cytoplasm. With respect to regulation, DNA binding is strongly activated by Mn(2+). Central regulator of manganese homeostasis. This is HTH-type transcriptional regulator MntR from Oceanobacillus iheyensis (strain DSM 14371 / CIP 107618 / JCM 11309 / KCTC 3954 / HTE831).